Here is a 344-residue protein sequence, read N- to C-terminus: Holliday junction branch migration complex subunit RuvB (344 aa).

Residues 1-185 (MTERSDRDVS…FGFTAHMDFY (185 aa)) are large ATPase domain (RuvB-L). ATP-binding positions include L24, R25, G66, K69, T70, S71, 132–134 (EDF), R175, Y185, and R222. Residue T70 participates in Mg(2+) binding. Residues 186 to 256 (EPAELERVLA…VAKAALEVYD (71 aa)) form a small ATPAse domain (RuvB-S) region. The segment at 259-344 (ELGLDRLDRA…VGASQPGLFE (86 aa)) is head domain (RuvB-H). Residues R314 and R319 each coordinate DNA.

Belongs to the RuvB family. In terms of assembly, homohexamer. Forms an RuvA(8)-RuvB(12)-Holliday junction (HJ) complex. HJ DNA is sandwiched between 2 RuvA tetramers; dsDNA enters through RuvA and exits via RuvB. An RuvB hexamer assembles on each DNA strand where it exits the tetramer. Each RuvB hexamer is contacted by two RuvA subunits (via domain III) on 2 adjacent RuvB subunits; this complex drives branch migration. In the full resolvosome a probable DNA-RuvA(4)-RuvB(12)-RuvC(2) complex forms which resolves the HJ.

The protein localises to the cytoplasm. It catalyses the reaction ATP + H2O = ADP + phosphate + H(+). Functionally, the RuvA-RuvB-RuvC complex processes Holliday junction (HJ) DNA during genetic recombination and DNA repair, while the RuvA-RuvB complex plays an important role in the rescue of blocked DNA replication forks via replication fork reversal (RFR). RuvA specifically binds to HJ cruciform DNA, conferring on it an open structure. The RuvB hexamer acts as an ATP-dependent pump, pulling dsDNA into and through the RuvAB complex. RuvB forms 2 homohexamers on either side of HJ DNA bound by 1 or 2 RuvA tetramers; 4 subunits per hexamer contact DNA at a time. Coordinated motions by a converter formed by DNA-disengaged RuvB subunits stimulates ATP hydrolysis and nucleotide exchange. Immobilization of the converter enables RuvB to convert the ATP-contained energy into a lever motion, pulling 2 nucleotides of DNA out of the RuvA tetramer per ATP hydrolyzed, thus driving DNA branch migration. The RuvB motors rotate together with the DNA substrate, which together with the progressing nucleotide cycle form the mechanistic basis for DNA recombination by continuous HJ branch migration. Branch migration allows RuvC to scan DNA until it finds its consensus sequence, where it cleaves and resolves cruciform DNA. The polypeptide is Holliday junction branch migration complex subunit RuvB (Mycobacterium tuberculosis (strain ATCC 25177 / H37Ra)).